Here is a 69-residue protein sequence, read N- to C-terminus: Sec-independent protein translocase protein TatA (69 aa).

The helical transmembrane segment at 1 to 21 (MMPGPFELIIILVIVLLLFGG) threads the bilayer.

This sequence belongs to the TatA/E family. In terms of assembly, the Tat system comprises two distinct complexes: a TatABC complex, containing multiple copies of TatA, TatB and TatC subunits, and a separate TatA complex, containing only TatA subunits. Substrates initially bind to the TatABC complex, which probably triggers association of the separate TatA complex to form the active translocon.

The protein resides in the cell inner membrane. In terms of biological role, part of the twin-arginine translocation (Tat) system that transports large folded proteins containing a characteristic twin-arginine motif in their signal peptide across membranes. TatA could form the protein-conducting channel of the Tat system. The chain is Sec-independent protein translocase protein TatA from Vesicomyosocius okutanii subsp. Calyptogena okutanii (strain HA).